Consider the following 536-residue polypeptide: MKQMSYVTRWLYSTSHKDIGMTYLGFGMLSAMMGTGMSVMMRMELSNGNSQFFHGNNQAFNVMMSGHALLMMFFFIMPVWMGAFGNFFLPMLMGAADMAFARLNNISFWCLPPALVCMVCSVLMEQGAGTGFTTYPPLSSMSAHSGPSVDLAMFAMHLTSMSSLLGAMNFMVTVLNMRTMGLHMVNMPLFAWAMFLTAMLLLLSLPVLTAAVTLLLMDRNFNTGFYEVGAGGDPVTYEHLFWFFGHPEVYILMMPGFGVMSHMVSTYSKKPMFGEMGMLYAMGSIGFLGFLVWSHHMFVVGLDIDSRAYFTSATMVIAVPTGIKIFSWLATIYGGELRLGVPMLFALGFLFLFTMGGLTGVMTSNASMDVAFHDTYYVVGHFHYVLSMGALFSLMGAYYYWGPAMFGLKYNRMLGEMHFWLLFMSVNVMFLPMHFLGLNGMPRRMPQYPDAFMGWNYMSSMGSAMSVMSVLVGLKSVLVQLENGENEELEMQVTPDFTESNLNREIRDSDLDLILTRPAEYHTYSELPVLTSNSHA.

A helical membrane pass occupies residues 19–39 (IGMTYLGFGMLSAMMGTGMSV). Glu44 contributes to the Ca(2+) binding site. Position 67 (His67) interacts with Fe(II)-heme a. Helical transmembrane passes span 69–89 (LLMMFFFIMPVWMGAFGNFFL), 103–123 (LNNISFWCLPPALVCMVCSVL), 152–172 (AMFAMHLTSMSSLLGAMNFMV), 188–208 (PLFAWAMFLTAMLLLLSLPVL), 240–260 (LFWFFGHPEVYILMMPGFGVM), and 273–293 (FGEMGMLYAMGSIGFLGFLVW). Residue His246 coordinates Cu cation. A cross-link (1'-histidyl-3'-tyrosine (His-Tyr)) is located at residues 246 to 250 (HPEVY). Tyr250 is an O2 binding site. Cu cation is bound by residues His295 and His296. 2 consecutive transmembrane segments (helical) span residues 315 to 335 (MVIAVPTGIKIFSWLATIYGG) and 341 to 361 (VPMLFALGFLFLFTMGGLTGV). Residues His373 and Asp374 each coordinate Mg(2+). Position 381 (His381) interacts with heme a3. Fe(II)-heme a is bound at residue His383. 2 helical membrane-spanning segments follow: residues 388–408 (MGALFSLMGAYYYWGPAMFGL) and 418–438 (HFWLLFMSVNVMFLPMHFLGL). Pro446 lines the Ca(2+) pocket. The chain crosses the membrane as a helical span at residues 461–481 (MGSAMSVMSVLVGLKSVLVQL).

The protein belongs to the heme-copper respiratory oxidase family. Component of the cytochrome c oxidase (complex IV, CIV), a multisubunit enzyme composed of a catalytic core of 3 subunits and several supernumerary subunits. The complex exists as a monomer or a dimer and forms supercomplexes (SCs) in the inner mitochondrial membrane with ubiquinol-cytochrome c oxidoreductase (cytochrome b-c1 complex, complex III, CIII). Heme serves as cofactor. Requires Cu cation as cofactor.

Its subcellular location is the mitochondrion inner membrane. The catalysed reaction is 4 Fe(II)-[cytochrome c] + O2 + 8 H(+)(in) = 4 Fe(III)-[cytochrome c] + 2 H2O + 4 H(+)(out). The protein operates within energy metabolism; oxidative phosphorylation. In terms of biological role, component of the cytochrome c oxidase, the last enzyme in the mitochondrial electron transport chain which drives oxidative phosphorylation. The respiratory chain contains 3 multisubunit complexes succinate dehydrogenase (complex II, CII), ubiquinol-cytochrome c oxidoreductase (cytochrome b-c1 complex, complex III, CIII) and cytochrome c oxidase (complex IV, CIV), that cooperate to transfer electrons derived from NADH and succinate to molecular oxygen, creating an electrochemical gradient over the inner membrane that drives transmembrane transport and the ATP synthase. Cytochrome c oxidase is the component of the respiratory chain that catalyzes the reduction of oxygen to water. Electrons originating from reduced cytochrome c in the intermembrane space (IMS) are transferred via the dinuclear copper A center (CU(A)) of subunit 2 and heme A of subunit 1 to the active site in subunit 1, a binuclear center (BNC) formed by heme A3 and copper B (CU(B)). The BNC reduces molecular oxygen to 2 water molecules using 4 electrons from cytochrome c in the IMS and 4 protons from the mitochondrial matrix. This is Cytochrome c oxidase subunit 1 (COX1) from Debaryomyces hansenii (strain ATCC 36239 / CBS 767 / BCRC 21394 / JCM 1990 / NBRC 0083 / IGC 2968) (Yeast).